Reading from the N-terminus, the 255-residue chain is Syntaxin-6 (255 aa).

Ser-2 carries the post-translational modification N-acetylserine. A Phosphoserine modification is found at Ser-2. Residues 2-168 (SMEDPFFVVK…QAQQQLIVEQ (167 aa)) form a required for interaction with VPS51 region. The Cytoplasmic portion of the chain corresponds to 2-234 (SMEDPFFVVK…VSHMTSDRRQ (233 aa)). Residues 41 to 74 (EEIDWTTNELRNNLRSIEWDLEDLDETISIVEAN) adopt a coiled-coil conformation. Ser-129 and Ser-152 each carry phosphoserine. In terms of domain architecture, t-SNARE coiled-coil homology spans 163 to 225 (QLIVEQQDEQ…DNVMKKLAKV (63 aa)). Residues 235–255 (WCAIAILFAVLLVVLILFLVL) form a helical; Anchor for type IV membrane protein membrane-spanning segment.

Belongs to the syntaxin family. In terms of assembly, identified in a complex containing STX6, STX12, VAMP4 and VTI1A. Binds EEA1. Interacts with VPS45A. Interacts with MARCHF2; the interaction promotes MARCHF2-mediated ubiquitination and degradation of CFTR. Interacts with MARCHF3. Interacts with GOPC. Interacts with BLTP3B (via C-terminal coiled-coil domain). Interacts with BAIAP3; this interaction is increased in the presence of calcium. Interacts with VPS13B.

The protein localises to the golgi apparatus membrane. The protein resides in the golgi apparatus. Its subcellular location is the trans-Golgi network membrane. It localises to the recycling endosome membrane. Functionally, SNARE promoting movement of transport vesicles to target membranes. Targets endosomes to the trans-Golgi network, and may therefore function in retrograde trafficking. Together with SNARE STX12, promotes movement of vesicles from endosomes to the cell membrane, and may therefore function in the endocytic recycling pathway. The polypeptide is Syntaxin-6 (STX6) (Homo sapiens (Human)).